A 229-amino-acid chain; its full sequence is Large ribosomal subunit protein uL1 (229 aa).

Belongs to the universal ribosomal protein uL1 family. Part of the 50S ribosomal subunit.

Functionally, binds directly to 23S rRNA. The L1 stalk is quite mobile in the ribosome, and is involved in E site tRNA release. Its function is as follows. Protein L1 is also a translational repressor protein, it controls the translation of the L11 operon by binding to its mRNA. This is Large ribosomal subunit protein uL1 from Staphylococcus aureus (strain MRSA252).